A 67-amino-acid chain; its full sequence is ATP synthase subunit c (67 aa).

The next 2 helical transmembrane spans lie at 6–26 (ILAL…LVAN) and 46–66 (IMGV…TFFV).

It belongs to the ATPase C chain family. F-type ATPases have 2 components, F(1) - the catalytic core - and F(0) - the membrane proton channel. F(1) has five subunits: alpha(3), beta(3), gamma(1), delta(1), epsilon(1). F(0) has three main subunits: a(1), b(2) and c(10-14). The alpha and beta chains form an alternating ring which encloses part of the gamma chain. F(1) is attached to F(0) by a central stalk formed by the gamma and epsilon chains, while a peripheral stalk is formed by the delta and b chains.

The protein resides in the cell membrane. Functionally, f(1)F(0) ATP synthase produces ATP from ADP in the presence of a proton or sodium gradient. F-type ATPases consist of two structural domains, F(1) containing the extramembraneous catalytic core and F(0) containing the membrane proton channel, linked together by a central stalk and a peripheral stalk. During catalysis, ATP synthesis in the catalytic domain of F(1) is coupled via a rotary mechanism of the central stalk subunits to proton translocation. Its function is as follows. Key component of the F(0) channel; it plays a direct role in translocation across the membrane. A homomeric c-ring of between 10-14 subunits forms the central stalk rotor element with the F(1) delta and epsilon subunits. The chain is ATP synthase subunit c from Streptococcus mutans serotype c (strain ATCC 700610 / UA159).